Consider the following 277-residue polypeptide: NAD kinase (277 aa).

Aspartate 55 serves as the catalytic Proton acceptor. Residues 55 to 56 (DG), 131 to 132 (NE), arginine 157, aspartate 159, and 170 to 175 (TAYNKS) each bind NAD(+).

It belongs to the NAD kinase family. A divalent metal cation is required as a cofactor.

Its subcellular location is the cytoplasm. The catalysed reaction is NAD(+) + ATP = ADP + NADP(+) + H(+). Functionally, involved in the regulation of the intracellular balance of NAD and NADP, and is a key enzyme in the biosynthesis of NADP. Catalyzes specifically the phosphorylation on 2'-hydroxyl of the adenosine moiety of NAD to yield NADP. The polypeptide is NAD kinase (Streptococcus mutans serotype c (strain ATCC 700610 / UA159)).